A 167-amino-acid polypeptide reads, in one-letter code: Endoribonuclease YbeY (167 aa).

His-131, His-135, and His-141 together coordinate Zn(2+).

Belongs to the endoribonuclease YbeY family. Zn(2+) is required as a cofactor.

It is found in the cytoplasm. Single strand-specific metallo-endoribonuclease involved in late-stage 70S ribosome quality control and in maturation of the 3' terminus of the 16S rRNA. The polypeptide is Endoribonuclease YbeY (Rickettsia conorii (strain ATCC VR-613 / Malish 7)).